A 335-amino-acid chain; its full sequence is MDNARMNSFLEYPILSSGDSGTCSARAYPSDHRITTFQSCAVSANSCGGDDRFLVGRGVQIGSPHHHHHHHHRHPQPATYQTSGNLGVSYSHSSCGPSYGSQNFSAPYSPYALNQEADVSGGYPQCAPAVYSGNLSSPMVQHHHHHQGYAGGAVGSPQYIHHSYGQEHQSLALATYNNSLSPLHASHQEACRSPASETSSPAQTFDWMKVKRNPPKTGKVGEYGYLGQPNAVRTNFTTKQLTELEKEFHFNKYLTRARRVEIAASLQLNETQVKIWFQNRRMKQKKREKEGLLPISPATPPGNDEKAEESSEKSSSSPCVPSPGSSTSDTLTTSH.

The tract at residues 61 to 80 is disordered; that stretch reads IGSPHHHHHHHHRHPQPATY. A compositionally biased stretch (basic residues) spans 64 to 75; that stretch reads PHHHHHHHHRHP. Residues 75–203 are interaction with OGT; that stretch reads PQPATYQTSG…PASETSSPAQ (129 aa). Positions 204–209 match the Antp-type hexapeptide motif; that stretch reads TFDWMK. A DNA-binding region (homeobox) is located at residues 229–288; that stretch reads PNAVRTNFTTKQLTELEKEFHFNKYLTRARRVEIAASLQLNETQVKIWFQNRRMKQKKRE. Residues 281–335 form a disordered region; sequence RMKQKKREKEGLLPISPATPPGNDEKAEESSEKSSSSPCVPSPGSSTSDTLTTSH. A compositionally biased stretch (basic and acidic residues) spans 303–312; that stretch reads NDEKAEESSE. A compositionally biased stretch (low complexity) spans 313–328; sequence KSSSSPCVPSPGSSTS.

The protein belongs to the Antp homeobox family. Labial subfamily. As to quaternary structure, interacts with OGT (via TPR repeats domain); the interaction takes place mainly in the nucleus. Forms a DNA-binding heterodimer with transcription factor PBX1.

The protein localises to the nucleus. In terms of biological role, sequence-specific transcription factor. Regulates multiple developmental processes including brainstem, inner and outer ear, abducens nerve and cardiovascular development and morphogenesis as well as cognition and behavior. Also part of a developmental regulatory system that provides cells with specific positional identities on the anterior-posterior axis. Acts on the anterior body structures. Seems to act in the maintenance and/or generation of hindbrain segments. Activates transcription in the presence of PBX1A and PKNOX1. This is Homeobox protein Hox-A1 (HOXA1) from Homo sapiens (Human).